A 420-amino-acid chain; its full sequence is Argininosuccinate synthase (420 aa).

An ATP-binding site is contributed by 11–19 (AFSGGLDTT). Tyrosine 88 serves as a coordination point for L-citrulline. Residue glycine 118 coordinates ATP. The L-aspartate site is built by threonine 120, asparagine 124, and aspartate 125. Asparagine 124 contributes to the L-citrulline binding site. The L-citrulline site is built by arginine 128, serine 174, serine 183, glutamate 257, and tyrosine 269. Positions 401–420 (KGAAVTDGSGDHAASEDTEE) are disordered. A compositionally biased stretch (basic and acidic residues) spans 409-420 (SGDHAASEDTEE).

This sequence belongs to the argininosuccinate synthase family. Type 1 subfamily. Homotetramer.

Its subcellular location is the cytoplasm. It catalyses the reaction L-citrulline + L-aspartate + ATP = 2-(N(omega)-L-arginino)succinate + AMP + diphosphate + H(+). The protein operates within amino-acid biosynthesis; L-arginine biosynthesis; L-arginine from L-ornithine and carbamoyl phosphate: step 2/3. This chain is Argininosuccinate synthase, found in Haloarcula marismortui (strain ATCC 43049 / DSM 3752 / JCM 8966 / VKM B-1809) (Halobacterium marismortui).